Here is a 492-residue protein sequence, read N- to C-terminus: N-succinylglutamate 5-semialdehyde dehydrogenase (492 aa).

Residue 220–225 (GSASTG) coordinates NAD(+). Residues Glu243 and Cys277 contribute to the active site.

It belongs to the aldehyde dehydrogenase family. AstD subfamily.

The catalysed reaction is N-succinyl-L-glutamate 5-semialdehyde + NAD(+) + H2O = N-succinyl-L-glutamate + NADH + 2 H(+). Its pathway is amino-acid degradation; L-arginine degradation via AST pathway; L-glutamate and succinate from L-arginine: step 4/5. Its function is as follows. Catalyzes the NAD-dependent reduction of succinylglutamate semialdehyde into succinylglutamate. This is N-succinylglutamate 5-semialdehyde dehydrogenase from Salmonella schwarzengrund (strain CVM19633).